We begin with the raw amino-acid sequence, 819 residues long: Outer membrane usher protein CssD (819 aa).

This sequence belongs to the fimbrial export usher family.

Its subcellular location is the cell outer membrane. Involved in the export and assembly of C6 fimbrial subunits across the outer membrane. The protein is Outer membrane usher protein CssD (cssD) of Escherichia coli.